The sequence spans 239 residues: Ribonuclease HII (239 aa).

In terms of domain architecture, RNase H type-2 spans 18-231; the sequence is KIIVGLDEAG…SKNLLKEIEE (214 aa). A divalent metal cation is bound by residues Asp24, Glu25, and Asp125.

This sequence belongs to the RNase HII family. Requires Mn(2+) as cofactor. Mg(2+) serves as cofactor.

The protein localises to the cytoplasm. The enzyme catalyses Endonucleolytic cleavage to 5'-phosphomonoester.. Functionally, endonuclease that specifically degrades the RNA of RNA-DNA hybrids. This Methanococcus maripaludis (strain C6 / ATCC BAA-1332) protein is Ribonuclease HII.